Consider the following 118-residue polypeptide: Ribosome-binding factor A (118 aa).

The protein belongs to the RbfA family. As to quaternary structure, monomer. Binds 30S ribosomal subunits, but not 50S ribosomal subunits or 70S ribosomes.

It localises to the cytoplasm. Functionally, one of several proteins that assist in the late maturation steps of the functional core of the 30S ribosomal subunit. Associates with free 30S ribosomal subunits (but not with 30S subunits that are part of 70S ribosomes or polysomes). Required for efficient processing of 16S rRNA. May interact with the 5'-terminal helix region of 16S rRNA. The polypeptide is Ribosome-binding factor A (Bacillus anthracis (strain A0248)).